The sequence spans 296 residues: Cytidine deaminase (296 aa).

CMP/dCMP-type deaminase domains follow at residues 47–167 and 186–296; these read TEAE…FGPK and DSSD…VDPV. Position 88-90 (88-90) interacts with substrate; that stretch reads NLE. A Zn(2+)-binding site is contributed by histidine 101. Glutamate 103 functions as the Proton donor in the catalytic mechanism. Zn(2+) contacts are provided by cysteine 128 and cysteine 131.

Belongs to the cytidine and deoxycytidylate deaminase family. In terms of assembly, homodimer. Zn(2+) is required as a cofactor.

It catalyses the reaction cytidine + H2O + H(+) = uridine + NH4(+). It carries out the reaction 2'-deoxycytidine + H2O + H(+) = 2'-deoxyuridine + NH4(+). In terms of biological role, this enzyme scavenges exogenous and endogenous cytidine and 2'-deoxycytidine for UMP synthesis. The protein is Cytidine deaminase of Shewanella sp. (strain MR-4).